A 153-amino-acid polypeptide reads, in one-letter code: D-aminoacyl-tRNA deacylase (153 aa).

The Gly-cisPro motif, important for rejection of L-amino acids motif lies at 137–138 (GP).

It belongs to the DTD family. In terms of assembly, homodimer.

Its subcellular location is the cytoplasm. The enzyme catalyses glycyl-tRNA(Ala) + H2O = tRNA(Ala) + glycine + H(+). It catalyses the reaction a D-aminoacyl-tRNA + H2O = a tRNA + a D-alpha-amino acid + H(+). Its function is as follows. An aminoacyl-tRNA editing enzyme that deacylates mischarged D-aminoacyl-tRNAs. Also deacylates mischarged glycyl-tRNA(Ala), protecting cells against glycine mischarging by AlaRS. Acts via tRNA-based rather than protein-based catalysis; rejects L-amino acids rather than detecting D-amino acids in the active site. By recycling D-aminoacyl-tRNA to D-amino acids and free tRNA molecules, this enzyme counteracts the toxicity associated with the formation of D-aminoacyl-tRNA entities in vivo and helps enforce protein L-homochirality. In Dehalococcoides mccartyi (strain ATCC BAA-2100 / JCM 16839 / KCTC 5957 / BAV1), this protein is D-aminoacyl-tRNA deacylase.